Reading from the N-terminus, the 467-residue chain is Membrane-bound acylglycerophosphatidylinositol O-acyltransferase mboat7 (467 aa).

The Cytoplasmic segment spans residues 1–5 (MSPDE). Residues 6–22 (LVYLGILAATIPVGFLF) traverse the membrane as a helical segment. The Lumenal segment spans residues 23 to 33 (RYLSPPVKQGA). Residues 34–57 (ALLLGLIISIATCGIHTLHSLCTV) form a helical membrane-spanning segment. The Cytoplasmic segment spans residues 58–73 (LGTWIIIKINWRSAPA). A helical transmembrane segment spans residues 74-93 (LSLAWTFLYLLFFRLVTWFG). Over 94–193 (LPQPTPFANA…LPGKEPCLQR (100 aa)) the chain is Lumenal. A helical membrane pass occupies residues 194 to 211 (LKMVPVYGLLFIAVNSVF). Topologically, residues 212 to 230 (PLSYVRTEDFLEHNYFYRF) are cytoplasmic. A helical membrane pass occupies residues 231–260 (FYMVAIFFVFRMRFYSAWCGAEAGCISAGL). The Lumenal segment spans residues 261 to 421 (GCYPQGALSK…LKASDTISYW (161 aa)). Asparagine 316 is a glycosylation site (N-linked (GlcNAc...) asparagine). Residues 422–442 (SSIYFVIHIIAIVCIAVGQFM) traverse the membrane as a helical segment. At 443-467 (KGGRKREKRERGEGEKEDAVREKAE) the chain is on the cytoplasmic side. Residues 447–467 (KREKRERGEGEKEDAVREKAE) are disordered. A compositionally biased stretch (basic and acidic residues) spans 451–467 (RERGEGEKEDAVREKAE).

It belongs to the membrane-bound acyltransferase family.

It localises to the endoplasmic reticulum membrane. The enzyme catalyses a 1-acyl-sn-glycero-3-phospho-(1D-myo-inositol) + (5Z,8Z,11Z,14Z)-eicosatetraenoyl-CoA = a 1-acyl-2-(5Z,8Z,11Z,14Z-eicosatetraenoyl)-sn-glycero-3-phospho-(1D-myo-inositol) + CoA. The catalysed reaction is (5Z,8Z,11Z,14Z)-eicosatetraenoyl-CoA + 1-hexadecanoyl-sn-glycero-3-phosphocholine = 1-hexadecanoyl-2-(5Z,8Z,11Z,14Z-eicosatetraenoyl)-sn-glycero-3-phosphocholine + CoA. It carries out the reaction a 1-acyl-sn-glycero-3-phospho-(1D-myo-inositol) + an acyl-CoA = a 1,2-diacyl-sn-glycero-3-phospho-(1D-myo-inositol) + CoA. It catalyses the reaction 1-octadecanoyl-sn-glycero-3-phospho-(1D-myo-inositol) + (5Z,8Z,11Z,14Z)-eicosatetraenoyl-CoA = 1-octadecanoyl-2-(5Z,8Z,11Z,14Z-eicosatetraenoyl)-sn-glycero-3-phospho-(1D-myo-inositol) + CoA. Its pathway is lipid metabolism; phospholipid metabolism. Functionally, acyltransferase which catalyzes the transfer of an acyl group from an acyl-CoA to a lysophosphatidylinositol (1-acylglycerophosphatidylinositol or LPI) leading to the production of a phosphatidylinositol (1,2-diacyl-sn-glycero-3-phosphoinositol or PI) and participates in the reacylation step of the phospholipid remodeling pathway also known as the Lands cycle. Prefers arachidonoyl-CoA as the acyl donor, thus contributing to the regulation of free levels arachidonic acid in cell. In Danio rerio (Zebrafish), this protein is Membrane-bound acylglycerophosphatidylinositol O-acyltransferase mboat7 (mboat7).